The primary structure comprises 114 residues: Large ribosomal subunit protein uL22 (114 aa).

The protein belongs to the universal ribosomal protein uL22 family. Part of the 50S ribosomal subunit.

Functionally, this protein binds specifically to 23S rRNA; its binding is stimulated by other ribosomal proteins, e.g. L4, L17, and L20. It is important during the early stages of 50S assembly. It makes multiple contacts with different domains of the 23S rRNA in the assembled 50S subunit and ribosome. The globular domain of the protein is located near the polypeptide exit tunnel on the outside of the subunit, while an extended beta-hairpin is found that lines the wall of the exit tunnel in the center of the 70S ribosome. The chain is Large ribosomal subunit protein uL22 from Alcanivorax borkumensis (strain ATCC 700651 / DSM 11573 / NCIMB 13689 / SK2).